Consider the following 268-residue polypeptide: 14-3-3-like protein GF14 iota (268 aa).

Serine 70 and serine 193 each carry phosphoserine. The residue at position 214 (threonine 214) is a Phosphothreonine. The tract at residues 240–268 (DLPEDGGEDNIKTEESKQEQAKPADATEN) is disordered. Basic and acidic residues predominate over residues 248-261 (DNIKTEESKQEQAK).

This sequence belongs to the 14-3-3 family. Expressed in flowers.

Its subcellular location is the nucleus. The protein localises to the cytoplasm. Functionally, is associated with a DNA binding complex that binds to the G box, a well-characterized cis-acting DNA regulatory element found in plant genes. This chain is 14-3-3-like protein GF14 iota, found in Arabidopsis thaliana (Mouse-ear cress).